A 503-amino-acid chain; its full sequence is Transcriptional regulator LovE (503 aa).

Positions 35–67 (CDRCHAQKIKCTGNKEVTGRAPCQRCQQAGLRC) form a DNA-binding region, zn(2)-C6 fungal-type. 2 disordered regions span residues 89-124 (ADPD…RQFL) and 331-358 (SHMS…HSSV). Low complexity predominate over residues 339 to 357 (SRSQSPSRDDTSSSSGHSS).

Its subcellular location is the nucleus. Functionally, transcription factor that regulates the expression of the he gene cluster that mediates the biosynthesis of lovastatin (also known as mevinolin, mevacor or monacolin K), a hypolipidemic inhibitor of (3S)-hydroxymethylglutaryl-coenzyme A (HMG-CoA) reductase (HMGR). The chain is Transcriptional regulator LovE from Aspergillus terreus.